Reading from the N-terminus, the 555-residue chain is Urocanate hydratase (555 aa).

Residues 52-53 (GG), Q130, 176-178 (GMG), E196, R201, 242-243 (NA), 263-267 (QTSAH), 273-274 (YL), and Y322 contribute to the NAD(+) site. C410 is a catalytic residue. G492 is an NAD(+) binding site.

It belongs to the urocanase family. Requires NAD(+) as cofactor.

It localises to the cytoplasm. The catalysed reaction is 4-imidazolone-5-propanoate = trans-urocanate + H2O. It participates in amino-acid degradation; L-histidine degradation into L-glutamate; N-formimidoyl-L-glutamate from L-histidine: step 2/3. Functionally, catalyzes the conversion of urocanate to 4-imidazolone-5-propionate. This Shewanella sp. (strain W3-18-1) protein is Urocanate hydratase.